The chain runs to 432 residues: Probable exopolygalacturonase X (432 aa).

Residues 1-23 (MKFSYSFVQVVSLLLSLSPSVEG) form the signal peptide. N113, N129, and N199 each carry an N-linked (GlcNAc...) asparagine glycan. The stretch at 231–252 (SDNIVIQNSVINNGDDCVSFKP) is one PbH1 1 repeat. D245 serves as the catalytic Proton donor. Cysteines 247 and 264 form a disulfide. 2 N-linked (GlcNAc...) asparagine glycosylation sites follow: N253 and N265. PbH1 repeat units follow at residues 254 to 274 (STNIIVQNLHCNGSHGISVGS), 285 to 306 (VQNVLVYNISMYNASDGARIKV), and 327 to 348 (VKNITYNQMYIENVDWAIEVTQ). Residue H268 is part of the active site. 5 N-linked (GlcNAc...) asparagine glycosylation sites follow: N292, N297, N329, N354, and N364. A PbH1 5 repeat occupies 362-394 (PSNLTISDIHFKNFRGTTSGKRDPDVGTIVCSS). A disulfide bridge links C392 with C398.

The protein belongs to the glycosyl hydrolase 28 family.

The protein resides in the secreted. It catalyses the reaction [(1-&gt;4)-alpha-D-galacturonosyl](n) + H2O = alpha-D-galacturonate + [(1-&gt;4)-alpha-D-galacturonosyl](n-1). Specific in hydrolyzing the terminal glycosidic bond of polygalacturonic acid and oligogalacturonates. This Neosartorya fischeri (strain ATCC 1020 / DSM 3700 / CBS 544.65 / FGSC A1164 / JCM 1740 / NRRL 181 / WB 181) (Aspergillus fischerianus) protein is Probable exopolygalacturonase X (pgaX).